The following is a 644-amino-acid chain: 3-isopropylmalate dehydratase (644 aa).

[4Fe-4S] cluster-binding residues include C400, C460, and C463. The segment at 521–568 is disordered; sequence SEIPGTPKQSPRQEVVAEFESEEDDVDSSSVDSAPVATPPSTGDSAGM. The segment covering 537-547 has biased composition (acidic residues); that stretch reads AEFESEEDDVD.

The protein belongs to the aconitase/IPM isomerase family. Monomer. The cofactor is [4Fe-4S] cluster.

It catalyses the reaction (2R,3S)-3-isopropylmalate = (2S)-2-isopropylmalate. The protein operates within amino-acid biosynthesis; L-leucine biosynthesis; L-leucine from 3-methyl-2-oxobutanoate: step 2/4. Catalyzes the isomerization between 2-isopropylmalate and 3-isopropylmalate, via the formation of 2-isopropylmaleate. This is 3-isopropylmalate dehydratase (LEUA) from Mucor circinelloides f. lusitanicus (Mucor racemosus var. lusitanicus).